A 153-amino-acid chain; its full sequence is SsrA-binding protein (153 aa).

The protein belongs to the SmpB family.

Its subcellular location is the cytoplasm. Functionally, required for rescue of stalled ribosomes mediated by trans-translation. Binds to transfer-messenger RNA (tmRNA), required for stable association of tmRNA with ribosomes. tmRNA and SmpB together mimic tRNA shape, replacing the anticodon stem-loop with SmpB. tmRNA is encoded by the ssrA gene; the 2 termini fold to resemble tRNA(Ala) and it encodes a 'tag peptide', a short internal open reading frame. During trans-translation Ala-aminoacylated tmRNA acts like a tRNA, entering the A-site of stalled ribosomes, displacing the stalled mRNA. The ribosome then switches to translate the ORF on the tmRNA; the nascent peptide is terminated with the 'tag peptide' encoded by the tmRNA and targeted for degradation. The ribosome is freed to recommence translation, which seems to be the essential function of trans-translation. In Cytophaga hutchinsonii (strain ATCC 33406 / DSM 1761 / CIP 103989 / NBRC 15051 / NCIMB 9469 / D465), this protein is SsrA-binding protein.